Consider the following 394-residue polypeptide: Elongation factor Tu (394 aa).

Residues 10–204 enclose the tr-type G domain; sequence KPHVNIGTIG…AVDSWIPLPE (195 aa). Residues 19–26 are G1; sequence GHVDHGKT. Residue 19–26 coordinates GTP; it reads GHVDHGKT. T26 contacts Mg(2+). Residues 60–64 are G2; the sequence is GITIN. The tract at residues 81-84 is G3; it reads DCPG. GTP is bound by residues 81–85 and 136–139; these read DCPGH and NKCD. The G4 stretch occupies residues 136–139; sequence NKCD. The tract at residues 174–176 is G5; it reads SGL.

Belongs to the TRAFAC class translation factor GTPase superfamily. Classic translation factor GTPase family. EF-Tu/EF-1A subfamily. In terms of assembly, monomer.

It is found in the cytoplasm. The enzyme catalyses GTP + H2O = GDP + phosphate + H(+). GTP hydrolase that promotes the GTP-dependent binding of aminoacyl-tRNA to the A-site of ribosomes during protein biosynthesis. The chain is Elongation factor Tu from Ureaplasma urealyticum serovar 10 (strain ATCC 33699 / Western).